The primary structure comprises 332 residues: Putative potassium channel regulatory protein sup-10 (332 aa).

An N-terminal signal peptide occupies residues 1–18 (MRYAVFIFLIVLIDLIYC). At 19–301 (WNSKRSFFIP…EISERNKRPA (283 aa)) the chain is on the extracellular side. Residues asparagine 61, asparagine 107, and asparagine 166 are each glycosylated (N-linked (GlcNAc...) asparagine). The chain crosses the membrane as a helical span at residues 302–322 (FVLVGLTGGIAVIILAFSIFW). The Cytoplasmic portion of the chain corresponds to 323-332 (GLNGSGFNKD).

In terms of assembly, may form a complex with sup-9 and unc-93 where sup-10 and unc-93 act as regulatory subunits of the two pore potassium channel sup-9. Sup-10 may regulate sup-9 via sup-18. In terms of tissue distribution, low levels in body-wall muscles, eight vulval muscles, intestinal muscles and anal depressor muscle.

It localises to the membrane. Its function is as follows. May contribute to coordination of muscle contraction as regulatory subunit of a nonessential potassium channel complex. The sequence is that of Putative potassium channel regulatory protein sup-10 from Caenorhabditis elegans.